A 202-amino-acid chain; its full sequence is Small ribosomal subunit protein uS4 (202 aa).

The tract at residues 15-42 is disordered; sequence LGDLPGLTRKAAKRSYPPGQHGQARRKR. One can recognise an S4 RNA-binding domain in the interval 90–152; that stretch reads SRLDNICFRL…KGSKQLAEGN (63 aa).

It belongs to the universal ribosomal protein uS4 family. In terms of assembly, part of the 30S ribosomal subunit. Contacts protein S5. The interaction surface between S4 and S5 is involved in control of translational fidelity.

In terms of biological role, one of the primary rRNA binding proteins, it binds directly to 16S rRNA where it nucleates assembly of the body of the 30S subunit. With S5 and S12 plays an important role in translational accuracy. This Synechococcus sp. (strain CC9902) protein is Small ribosomal subunit protein uS4.